The following is a 309-amino-acid chain: tRNA dimethylallyltransferase (309 aa).

Residue 13-20 (GPTAVGKS) coordinates ATP. 15–20 (TAVGKS) is a binding site for substrate.

The protein belongs to the IPP transferase family. Monomer. Mg(2+) serves as cofactor.

It catalyses the reaction adenosine(37) in tRNA + dimethylallyl diphosphate = N(6)-dimethylallyladenosine(37) in tRNA + diphosphate. Catalyzes the transfer of a dimethylallyl group onto the adenine at position 37 in tRNAs that read codons beginning with uridine, leading to the formation of N6-(dimethylallyl)adenosine (i(6)A). The polypeptide is tRNA dimethylallyltransferase (Lacticaseibacillus paracasei (strain ATCC 334 / BCRC 17002 / CCUG 31169 / CIP 107868 / KCTC 3260 / NRRL B-441) (Lactobacillus paracasei)).